The following is a 355-amino-acid chain: MNTLFMHCRPGFEGEVCAEISEHAARLGVAGYAKGKPQSACAEFVCAEAEGAERLMAQLRFAQLIFPRQWARGSYIELPETDRISVLLEHLAALPVFGSLWLEVLDSNDGKELSTFCRKFEVPLRKALEKAGRLVDNASLPRLLLTFISGRRVFVGVAEANNSALWPMGIPRLKFPREAPSRSTLKLEEAWHQFIPREQWEQRLGDDMTGVDLGASPGGWTYQLVRRGMLVTAIDNGPMAESLMDTGLVQHLMADGFTWQPKQPVDWMVCDIVEKPARTTSLIETWLGEGLCREAVVNLKLPMKQRYAEVRRLLDRMEATFKARKLKVSIACKQLYHDREEVTCHLRRLDLKPRK.

S-adenosyl-L-methionine contacts are provided by residues Ser-183, 216 to 219 (SPGG), Asp-235, Asp-255, and Asp-271. The active-site Proton acceptor is Lys-300.

This sequence belongs to the class I-like SAM-binding methyltransferase superfamily. RNA methyltransferase RlmE family. RlmM subfamily. In terms of assembly, monomer.

The protein localises to the cytoplasm. The catalysed reaction is cytidine(2498) in 23S rRNA + S-adenosyl-L-methionine = 2'-O-methylcytidine(2498) in 23S rRNA + S-adenosyl-L-homocysteine + H(+). Catalyzes the 2'-O-methylation at nucleotide C2498 in 23S rRNA. The sequence is that of Ribosomal RNA large subunit methyltransferase M from Pseudomonas putida (strain W619).